The primary structure comprises 283 residues: tRNA-cytidine(32) 2-sulfurtransferase (283 aa).

Residues 37–42 (SGGKDS) carry the PP-loop motif motif. [4Fe-4S] cluster is bound by residues Cys112, Cys115, and Cys203.

It belongs to the TtcA family. As to quaternary structure, homodimer. The cofactor is Mg(2+). [4Fe-4S] cluster is required as a cofactor.

The protein localises to the cytoplasm. It catalyses the reaction cytidine(32) in tRNA + S-sulfanyl-L-cysteinyl-[cysteine desulfurase] + AH2 + ATP = 2-thiocytidine(32) in tRNA + L-cysteinyl-[cysteine desulfurase] + A + AMP + diphosphate + H(+). Its pathway is tRNA modification. In terms of biological role, catalyzes the ATP-dependent 2-thiolation of cytidine in position 32 of tRNA, to form 2-thiocytidine (s(2)C32). The sulfur atoms are provided by the cysteine/cysteine desulfurase (IscS) system. The sequence is that of tRNA-cytidine(32) 2-sulfurtransferase from Legionella pneumophila (strain Paris).